The chain runs to 242 residues: Mediator of RNA polymerase II transcription subunit 19-A (242 aa).

The segment covering 1-15 (MTEIFSTLFGQNDAQ) has biased composition (polar residues). 2 disordered regions span residues 1–33 (MTEIFSTLFGQNDAQPPSGPAALGFAPGKPPPS) and 171–242 (PPKK…NSLR). Basic residues predominate over residues 171 to 184 (PPKKKSKHKHRHHH). Basic and acidic residues predominate over residues 193 to 210 (TRTDPTKKKKKKDNEPER). The segment covering 211-223 (RKKKKDKKKKKNR) has biased composition (basic residues). Over residues 232–242 (TGSQPNSNSLR) the composition is skewed to polar residues.

The protein belongs to the Mediator complex subunit 19 family. In terms of assembly, component of the Mediator complex.

The protein resides in the nucleus. Component of the Mediator complex, a coactivator involved in the regulated transcription of nearly all RNA polymerase II-dependent genes. Mediator functions as a bridge to convey information from gene-specific regulatory proteins to the basal RNA polymerase II transcription machinery. Mediator is recruited to promoters by direct interactions with regulatory proteins and serves as a scaffold for the assembly of a functional preinitiation complex with RNA polymerase II and the general transcription factors. This is Mediator of RNA polymerase II transcription subunit 19-A (med19a) from Danio rerio (Zebrafish).